Reading from the N-terminus, the 358-residue chain is Ribosomal RNA large subunit methyltransferase M (358 aa).

Residues S187, 220-223 (CPGG), D239, D259, and D276 contribute to the S-adenosyl-L-methionine site. K305 serves as the catalytic Proton acceptor.

The protein belongs to the class I-like SAM-binding methyltransferase superfamily. RNA methyltransferase RlmE family. RlmM subfamily. Monomer.

The protein resides in the cytoplasm. It catalyses the reaction cytidine(2498) in 23S rRNA + S-adenosyl-L-methionine = 2'-O-methylcytidine(2498) in 23S rRNA + S-adenosyl-L-homocysteine + H(+). Functionally, catalyzes the 2'-O-methylation at nucleotide C2498 in 23S rRNA. This is Ribosomal RNA large subunit methyltransferase M from Shewanella woodyi (strain ATCC 51908 / MS32).